We begin with the raw amino-acid sequence, 209 residues long: GTP cyclohydrolase-2 (209 aa).

49 to 53 (RIHSE) is a GTP binding site. The Zn(2+) site is built by cysteine 54, cysteine 65, and cysteine 67. GTP is bound by residues glutamine 70, 92-94 (EGR), and threonine 114. Aspartate 126 serves as the catalytic Proton acceptor. Residue arginine 128 is the Nucleophile of the active site. GTP is bound by residues threonine 149 and lysine 154.

It belongs to the GTP cyclohydrolase II family. Zn(2+) serves as cofactor.

It catalyses the reaction GTP + 4 H2O = 2,5-diamino-6-hydroxy-4-(5-phosphoribosylamino)-pyrimidine + formate + 2 phosphate + 3 H(+). The protein operates within cofactor biosynthesis; riboflavin biosynthesis; 5-amino-6-(D-ribitylamino)uracil from GTP: step 1/4. In terms of biological role, catalyzes the conversion of GTP to 2,5-diamino-6-ribosylamino-4(3H)-pyrimidinone 5'-phosphate (DARP), formate and pyrophosphate. The protein is GTP cyclohydrolase-2 of Shewanella halifaxensis (strain HAW-EB4).